A 101-amino-acid polypeptide reads, in one-letter code: MIPGEIFPAEGEILLNAERMQVTLVVSNAGDRPVQVGSHYHFAETNPALDFDREAARGMRLDIPAGTAVRFEPGQTREVRLVSYAGAREVYGFNGRIMGKL.

This sequence belongs to the urease beta subunit family. In terms of assembly, heterotrimer of UreA (gamma), UreB (beta) and UreC (alpha) subunits. Three heterotrimers associate to form the active enzyme.

It is found in the cytoplasm. It carries out the reaction urea + 2 H2O + H(+) = hydrogencarbonate + 2 NH4(+). The protein operates within nitrogen metabolism; urea degradation; CO(2) and NH(3) from urea (urease route): step 1/1. The polypeptide is Urease subunit beta (Cereibacter sphaeroides (strain ATCC 17025 / ATH 2.4.3) (Rhodobacter sphaeroides)).